The sequence spans 660 residues: DNA mismatch repair protein MutL (660 aa).

The protein belongs to the DNA mismatch repair MutL/HexB family.

Its function is as follows. This protein is involved in the repair of mismatches in DNA. It is required for dam-dependent methyl-directed DNA mismatch repair. May act as a 'molecular matchmaker', a protein that promotes the formation of a stable complex between two or more DNA-binding proteins in an ATP-dependent manner without itself being part of a final effector complex. The chain is DNA mismatch repair protein MutL from Streptococcus pyogenes serotype M3 (strain ATCC BAA-595 / MGAS315).